Reading from the N-terminus, the 397-residue chain is G2/mitotic-specific cyclin-B2 (397 aa).

Disordered stretches follow at residues 1-20 (MALL…DTGV) and 64-97 (KVTH…PEDV). T8 is modified (phosphothreonine). The residue at position 11 (S11) is a Phosphoserine. Residues 64–74 (KVTHVNKQPKP) are compositionally biased toward polar residues. Residues S77, S98, and S391 each carry the phosphoserine modification.

Belongs to the cyclin family. Cyclin AB subfamily. Interacts with the CDK1 protein kinase to form a serine/threonine kinase holoenzyme complex also known as maturation promoting factor (MPF). The cyclin subunit imparts substrate specificity to the complex.

Functionally, essential for the control of the cell cycle at the G2/M (mitosis) transition. The chain is G2/mitotic-specific cyclin-B2 (CCNB2) from Mesocricetus auratus (Golden hamster).